Reading from the N-terminus, the 398-residue chain is MNIHEYQAKELLKSYGVAVLDGHVAWTGEEAAEAARKLPGPVYVVKSQIHAGGRGAGHFKDDPEGKGGVRLAKSPEEVAAAAEAMLGNTLVTKQTGPAGRVVRRVYVEAGCDIKRELYLSLLVDRAKSEIVIMASTEGGMEIEEVAEKHPEKILRVAVDPASGISGFHARRLGFGLGLDATQMKAFAKFVNAMYKAFVALDCAIVEINPLVVTGAGEVVALDAKVSFDDNALYRHPDLEKLRDEAEEDPKELEAAKHSLNYVALDGSIGCMVNGAGLAMATMDIIKLYGAEPANFLDVGGGATKERVTAAFKIILSDPNVEGILVNIFGGIMRCDVIAEGVVAAAREVSLSVPLVVRLEGTNVQLGKDILSKSGLPIIAADNLADAAQKIVAAVKEAA.

Residues lysine 9–glutamate 253 form the ATP-grasp domain. ATP contacts are provided by residues lysine 46, glycine 53–glycine 55, glutamate 108, cysteine 111, and glutamate 116. 2 residues coordinate Mg(2+): asparagine 208 and aspartate 222. Substrate is bound by residues asparagine 273 and glycine 330–methionine 332.

Belongs to the succinate/malate CoA ligase beta subunit family. Heterotetramer of two alpha and two beta subunits. Requires Mg(2+) as cofactor.

The catalysed reaction is succinate + ATP + CoA = succinyl-CoA + ADP + phosphate. It carries out the reaction GTP + succinate + CoA = succinyl-CoA + GDP + phosphate. It functions in the pathway carbohydrate metabolism; tricarboxylic acid cycle; succinate from succinyl-CoA (ligase route): step 1/1. Succinyl-CoA synthetase functions in the citric acid cycle (TCA), coupling the hydrolysis of succinyl-CoA to the synthesis of either ATP or GTP and thus represents the only step of substrate-level phosphorylation in the TCA. The beta subunit provides nucleotide specificity of the enzyme and binds the substrate succinate, while the binding sites for coenzyme A and phosphate are found in the alpha subunit. In Acidiphilium cryptum (strain JF-5), this protein is Succinate--CoA ligase [ADP-forming] subunit beta.